A 326-amino-acid polypeptide reads, in one-letter code: Lipoyl synthase (326 aa).

[4Fe-4S] cluster contacts are provided by Cys74, Cys79, Cys85, Cys100, Cys104, Cys107, and Ser314. A Radical SAM core domain is found at 85–303 (CFGRGTATFM…EEEAYKMGFS (219 aa)).

This sequence belongs to the radical SAM superfamily. Lipoyl synthase family. Requires [4Fe-4S] cluster as cofactor.

The protein resides in the cytoplasm. It carries out the reaction [[Fe-S] cluster scaffold protein carrying a second [4Fe-4S](2+) cluster] + N(6)-octanoyl-L-lysyl-[protein] + 2 oxidized [2Fe-2S]-[ferredoxin] + 2 S-adenosyl-L-methionine + 4 H(+) = [[Fe-S] cluster scaffold protein] + N(6)-[(R)-dihydrolipoyl]-L-lysyl-[protein] + 4 Fe(3+) + 2 hydrogen sulfide + 2 5'-deoxyadenosine + 2 L-methionine + 2 reduced [2Fe-2S]-[ferredoxin]. The protein operates within protein modification; protein lipoylation via endogenous pathway; protein N(6)-(lipoyl)lysine from octanoyl-[acyl-carrier-protein]: step 2/2. Catalyzes the radical-mediated insertion of two sulfur atoms into the C-6 and C-8 positions of the octanoyl moiety bound to the lipoyl domains of lipoate-dependent enzymes, thereby converting the octanoylated domains into lipoylated derivatives. This Acidovorax ebreus (strain TPSY) (Diaphorobacter sp. (strain TPSY)) protein is Lipoyl synthase.